The chain runs to 717 residues: DNA ligase (717 aa).

NAD(+) contacts are provided by residues 44 to 48, 93 to 94, and glutamate 127; these read DAEYD and SL. The active-site N6-AMP-lysine intermediate is the lysine 129. 4 residues coordinate NAD(+): arginine 150, glutamate 186, lysine 302, and lysine 326. Residues cysteine 431, cysteine 434, cysteine 455, and cysteine 461 each contribute to the Zn(2+) site. The BRCT domain occupies 639–717; sequence TSGSPVVGKT…EDEWLELIGG (79 aa).

Belongs to the NAD-dependent DNA ligase family. LigA subfamily. Requires Mg(2+) as cofactor. Mn(2+) is required as a cofactor.

The enzyme catalyses NAD(+) + (deoxyribonucleotide)n-3'-hydroxyl + 5'-phospho-(deoxyribonucleotide)m = (deoxyribonucleotide)n+m + AMP + beta-nicotinamide D-nucleotide.. DNA ligase that catalyzes the formation of phosphodiester linkages between 5'-phosphoryl and 3'-hydroxyl groups in double-stranded DNA using NAD as a coenzyme and as the energy source for the reaction. It is essential for DNA replication and repair of damaged DNA. The sequence is that of DNA ligase from Rhizobium rhizogenes (strain K84 / ATCC BAA-868) (Agrobacterium radiobacter).